We begin with the raw amino-acid sequence, 292 residues long: uncharacterized protein (292 aa).

This is an uncharacterized protein from Acanthamoeba polyphaga (Amoeba).